The chain runs to 211 residues: uncharacterized protein (211 aa).

It belongs to the nucleoside deoxyribosyltransferase family.

The protein resides in the cytoplasm. The protein localises to the nucleus. This is an uncharacterized protein from Schizosaccharomyces pombe (strain 972 / ATCC 24843) (Fission yeast).